The chain runs to 197 residues: dTTP/UTP pyrophosphatase (197 aa).

The Proton acceptor role is filled by D70.

It belongs to the Maf family. YhdE subfamily. It depends on a divalent metal cation as a cofactor.

It localises to the cytoplasm. The enzyme catalyses dTTP + H2O = dTMP + diphosphate + H(+). It catalyses the reaction UTP + H2O = UMP + diphosphate + H(+). In terms of biological role, nucleoside triphosphate pyrophosphatase that hydrolyzes dTTP and UTP. May have a dual role in cell division arrest and in preventing the incorporation of modified nucleotides into cellular nucleic acids. The polypeptide is dTTP/UTP pyrophosphatase (yceF2) (Escherichia coli O6:K15:H31 (strain 536 / UPEC)).